Consider the following 136-residue polypeptide: Histone H3 (136 aa).

Belongs to the histone H3 family. The nucleosome is a histone octamer containing two molecules each of H2A, H2B, H3 and H4 assembled in one H3-H4 heterotetramer and two H2A-H2B heterodimers. The octamer wraps approximately 147 bp of DNA.

It is found in the nucleomorph. It localises to the chromosome. Functionally, core component of nucleosome. Nucleosomes wrap and compact DNA into chromatin, limiting DNA accessibility to the cellular machineries which require DNA as a template. Histones thereby play a central role in transcription regulation, DNA repair, DNA replication and chromosomal stability. DNA accessibility is regulated via a complex set of post-translational modifications of histones, also called histone code, and nucleosome remodeling. This is Histone H3 from Guillardia theta (Cryptophyte).